The chain runs to 261 residues: Tryptophan synthase alpha chain (261 aa).

Catalysis depends on proton acceptor residues Glu49 and Asp60.

Belongs to the TrpA family. As to quaternary structure, tetramer of two alpha and two beta chains.

The enzyme catalyses (1S,2R)-1-C-(indol-3-yl)glycerol 3-phosphate + L-serine = D-glyceraldehyde 3-phosphate + L-tryptophan + H2O. Its pathway is amino-acid biosynthesis; L-tryptophan biosynthesis; L-tryptophan from chorismate: step 5/5. Functionally, the alpha subunit is responsible for the aldol cleavage of indoleglycerol phosphate to indole and glyceraldehyde 3-phosphate. The protein is Tryptophan synthase alpha chain of Roseiflexus sp. (strain RS-1).